Consider the following 421-residue polypeptide: Tyrosine--tRNA ligase (421 aa).

Y35 contributes to the L-tyrosine binding site. Positions 40 to 49 (PTADSLHIGH) match the 'HIGH' region motif. Positions 170 and 174 each coordinate L-tyrosine. The short motif at 232–236 (KFGKT) is the 'KMSKS' region element. K235 contributes to the ATP binding site. The 67-residue stretch at 355–421 (LSLVDVLVES…GKKKYFLITY (67 aa)) folds into the S4 RNA-binding domain.

It belongs to the class-I aminoacyl-tRNA synthetase family. TyrS type 1 subfamily. Homodimer.

It localises to the cytoplasm. The enzyme catalyses tRNA(Tyr) + L-tyrosine + ATP = L-tyrosyl-tRNA(Tyr) + AMP + diphosphate + H(+). Functionally, catalyzes the attachment of tyrosine to tRNA(Tyr) in a two-step reaction: tyrosine is first activated by ATP to form Tyr-AMP and then transferred to the acceptor end of tRNA(Tyr). The polypeptide is Tyrosine--tRNA ligase (Bacillus velezensis (strain DSM 23117 / BGSC 10A6 / LMG 26770 / FZB42) (Bacillus amyloliquefaciens subsp. plantarum)).